Here is a 488-residue protein sequence, read N- to C-terminus: Katanin p60 ATPase-containing subunit A-like 1 (488 aa).

N-acetylmethionine is present on Met1. The segment at 95 to 179 (DPAVWPPPVP…GASDSEIPKF (85 aa)) is disordered. The span at 116 to 127 (PNREVRPLRKDV) shows a compositional bias: basic and acidic residues. Low complexity predominate over residues 128–138 (GAGARGLVGRA). Residues 142–167 (SKSDKPASRDKDYRARGRDDKARKNV) are compositionally biased toward basic and acidic residues. Position 172 is a phosphoserine (Ser172). 246-253 (GPPGTGKT) contributes to the ATP binding site.

This sequence belongs to the AAA ATPase family. Katanin p60 subunit A1 subfamily. A-like 1 sub-subfamily. In terms of assembly, interacts with KATNB1 and KATNBL1. In terms of tissue distribution, widely expressed, including in testis, brain, heart, lung, kidney, liver, spleen, seminal vesicles and ovary. In testis, restricted to Sertoli cells within the seminiferous epithelium (at protein level).

It localises to the cytoplasm. The protein resides in the cytoskeleton. The protein localises to the spindle pole. Its subcellular location is the spindle. The catalysed reaction is n ATP + n H2O + a microtubule = n ADP + n phosphate + (n+1) alpha/beta tubulin heterodimers.. Functionally, regulates microtubule dynamics in Sertoli cells, a process that is essential for spermiogenesis and male fertility. Severs microtubules in an ATP-dependent manner, promoting rapid reorganization of cellular microtubule arrays. Has microtubule-severing activity in vitro. The chain is Katanin p60 ATPase-containing subunit A-like 1 (Katnal1) from Mus musculus (Mouse).